Reading from the N-terminus, the 409-residue chain is Na(+)-translocating NADH-quinone reductase subunit F (409 aa).

Residues Phe-5–Phe-25 form a helical membrane-spanning segment. Positions Gly-34–Ile-128 constitute a 2Fe-2S ferredoxin-type domain. [2Fe-2S] cluster-binding residues include Cys-71, Cys-77, Cys-80, and Cys-112. An FAD-binding FR-type domain is found at Val-131–Lys-271.

This sequence belongs to the NqrF family. Composed of six subunits; NqrA, NqrB, NqrC, NqrD, NqrE and NqrF. It depends on [2Fe-2S] cluster as a cofactor. Requires FAD as cofactor.

Its subcellular location is the cell inner membrane. The enzyme catalyses a ubiquinone + n Na(+)(in) + NADH + H(+) = a ubiquinol + n Na(+)(out) + NAD(+). Its function is as follows. NQR complex catalyzes the reduction of ubiquinone-1 to ubiquinol by two successive reactions, coupled with the transport of Na(+) ions from the cytoplasm to the periplasm. The first step is catalyzed by NqrF, which accepts electrons from NADH and reduces ubiquinone-1 to ubisemiquinone by a one-electron transfer pathway. The sequence is that of Na(+)-translocating NADH-quinone reductase subunit F from Haemophilus ducreyi (strain 35000HP / ATCC 700724).